Here is a 588-residue protein sequence, read N- to C-terminus: Lysophospholipase 2 (588 aa).

The segment at 15-38 (NRALPNAPDGYTPQGETCPSKRPS) is disordered. In terms of domain architecture, PLA2c spans 31–574 (TCPSKRPSIR…KTYCWNGTIN (544 aa)). N-linked (GlcNAc...) asparagine glycosylation is found at Asn41, Asn58, Asn77, Asn84, Asn88, Asn119, Asn123, Asn157, Asn167, Asn228, Asn272, Asn302, Asn340, Asn431, Asn449, Asn478, Asn481, Asn501, Asn510, Asn529, Asn553, Asn570, and Asn574.

This sequence belongs to the lysophospholipase family.

It catalyses the reaction a 1-acyl-sn-glycero-3-phosphocholine + H2O = sn-glycerol 3-phosphocholine + a fatty acid + H(+). Functionally, catalyzes the release of fatty acids from lysophospholipids. This Aspergillus fumigatus (strain ATCC MYA-4609 / CBS 101355 / FGSC A1100 / Af293) (Neosartorya fumigata) protein is Lysophospholipase 2 (plb2).